The chain runs to 422 residues: 4-hydroxy-3-methylbut-2-en-1-yl diphosphate synthase (flavodoxin) (422 aa).

Residues C316, C319, C362, and E369 each coordinate [4Fe-4S] cluster.

It belongs to the IspG family. It depends on [4Fe-4S] cluster as a cofactor.

The enzyme catalyses (2E)-4-hydroxy-3-methylbut-2-enyl diphosphate + oxidized [flavodoxin] + H2O + 2 H(+) = 2-C-methyl-D-erythritol 2,4-cyclic diphosphate + reduced [flavodoxin]. The protein operates within isoprenoid biosynthesis; isopentenyl diphosphate biosynthesis via DXP pathway; isopentenyl diphosphate from 1-deoxy-D-xylulose 5-phosphate: step 5/6. Converts 2C-methyl-D-erythritol 2,4-cyclodiphosphate (ME-2,4cPP) into 1-hydroxy-2-methyl-2-(E)-butenyl 4-diphosphate. The sequence is that of 4-hydroxy-3-methylbut-2-en-1-yl diphosphate synthase (flavodoxin) from Ehrlichia ruminantium (strain Gardel).